The following is a 489-amino-acid chain: GTPase Der (489 aa).

EngA-type G domains lie at 30 to 199 (PVVS…KDKP) and 227 to 403 (FRLA…SRSH). GTP-binding positions include 36–43 (GRQNVGKS), 85–89 (DTPGL), 151–154 (NKAD), 233–240 (GKPNSGKS), 280–284 (DTAGI), and 345–348 (NKWD). The region spanning 404 to 488 (RKVSTSELNK…PIRLEFRSDR (85 aa)) is the KH-like domain.

It belongs to the TRAFAC class TrmE-Era-EngA-EngB-Septin-like GTPase superfamily. EngA (Der) GTPase family. In terms of assembly, associates with the 50S ribosomal subunit.

GTPase that plays an essential role in the late steps of ribosome biogenesis. The protein is GTPase Der of Leptospira interrogans serogroup Icterohaemorrhagiae serovar copenhageni (strain Fiocruz L1-130).